A 771-amino-acid polypeptide reads, in one-letter code: UPF0313 protein PSPTO_4928 (771 aa).

The Radical SAM core domain occupies 371-649 (AYDMIRFSVN…KAFLRYHDPK (279 aa)). [4Fe-4S] cluster contacts are provided by Cys-385, Cys-389, and Cys-392. A disordered region spans residues 683 to 771 (DTYQSARRKN…KPARKPVVPR (89 aa)). 2 stretches are compositionally biased toward basic and acidic residues: residues 726-735 (KPWDKREEAK) and 745-754 (AAKERMDAAK). Over residues 756–765 (GKGKGGKPAR) the composition is skewed to basic residues.

Belongs to the UPF0313 family. [4Fe-4S] cluster serves as cofactor.

In Pseudomonas syringae pv. tomato (strain ATCC BAA-871 / DC3000), this protein is UPF0313 protein PSPTO_4928.